The following is a 293-amino-acid chain: ATP phosphoribosyltransferase (293 aa).

The protein belongs to the ATP phosphoribosyltransferase family. Long subfamily. The cofactor is Mg(2+).

It localises to the cytoplasm. It catalyses the reaction 1-(5-phospho-beta-D-ribosyl)-ATP + diphosphate = 5-phospho-alpha-D-ribose 1-diphosphate + ATP. It participates in amino-acid biosynthesis; L-histidine biosynthesis; L-histidine from 5-phospho-alpha-D-ribose 1-diphosphate: step 1/9. With respect to regulation, feedback inhibited by histidine. Functionally, catalyzes the condensation of ATP and 5-phosphoribose 1-diphosphate to form N'-(5'-phosphoribosyl)-ATP (PR-ATP). Has a crucial role in the pathway because the rate of histidine biosynthesis seems to be controlled primarily by regulation of HisG enzymatic activity. The protein is ATP phosphoribosyltransferase of Nitratidesulfovibrio vulgaris (strain DP4) (Desulfovibrio vulgaris).